The chain runs to 217 residues: Glutathione S-transferase U20 (217 aa).

The 80-residue stretch at N3–N82 folds into the GST N-terminal domain. Glutathione-binding residues include S13, I54, and S67. A GST C-terminal domain is found at D88–Y208.

It belongs to the GST superfamily. Tau family. Homodimerization. Interacts with JAR1/FIN219 under continuous far red (cFR) light to stimulate JAR1/FIN219 activity and substrate selectivity. As to expression, mostly associated with vascular tissues, especially near hydathodes.

The protein localises to the nucleus. Its subcellular location is the cytoplasm. The protein resides in the cytosol. It catalyses the reaction RX + glutathione = an S-substituted glutathione + a halide anion + H(+). Activated by JAR1/FIN219. In terms of biological role, exhibits glutathione-dependent thiol transferase activities. Can use glutathione (GSH) and 1-chloro-2,4-dinitrobenzene (CDNB) as substrates. Involved in the regulation of far-red light influence on development. Regulator of the interplay between light and JA signaling by increasing JAR1/FIN219 efficiency. Maybe involved in gravitropic signal transduction. The chain is Glutathione S-transferase U20 from Arabidopsis thaliana (Mouse-ear cress).